A 139-amino-acid chain; its full sequence is uncharacterized protein (139 aa).

Residues 1 to 62 form the HTH asnC-type domain; it reads MDDTDLQILS…NICYEKLNKH (62 aa). The segment at residues 20–39 is a DNA-binding region (H-T-H motif); the sequence is MVELGKLVGLSSPSAAERVR.

This is an uncharacterized protein from Bacillus subtilis (strain 168).